A 94-amino-acid chain; its full sequence is Small ribosomal subunit protein bS18 (94 aa).

This sequence belongs to the bacterial ribosomal protein bS18 family. Part of the 30S ribosomal subunit. Forms a tight heterodimer with protein bS6.

Functionally, binds as a heterodimer with protein bS6 to the central domain of the 16S rRNA, where it helps stabilize the platform of the 30S subunit. This Leptothrix cholodnii (strain ATCC 51168 / LMG 8142 / SP-6) (Leptothrix discophora (strain SP-6)) protein is Small ribosomal subunit protein bS18.